We begin with the raw amino-acid sequence, 288 residues long: Bifunctional protein FolD (288 aa).

NADP(+)-binding positions include 164-166 and V230; that span reads GRS.

Belongs to the tetrahydrofolate dehydrogenase/cyclohydrolase family. In terms of assembly, homodimer.

The catalysed reaction is (6R)-5,10-methylene-5,6,7,8-tetrahydrofolate + NADP(+) = (6R)-5,10-methenyltetrahydrofolate + NADPH. It carries out the reaction (6R)-5,10-methenyltetrahydrofolate + H2O = (6R)-10-formyltetrahydrofolate + H(+). It participates in one-carbon metabolism; tetrahydrofolate interconversion. In terms of biological role, catalyzes the oxidation of 5,10-methylenetetrahydrofolate to 5,10-methenyltetrahydrofolate and then the hydrolysis of 5,10-methenyltetrahydrofolate to 10-formyltetrahydrofolate. The protein is Bifunctional protein FolD of Thermomicrobium roseum (strain ATCC 27502 / DSM 5159 / P-2).